Reading from the N-terminus, the 328-residue chain is 4-hydroxy-3-methylbut-2-enyl diphosphate reductase (328 aa).

[4Fe-4S] cluster is bound at residue Cys-13. Positions 41 and 75 each coordinate (2E)-4-hydroxy-3-methylbut-2-enyl diphosphate. The dimethylallyl diphosphate site is built by His-41 and His-75. Positions 41 and 75 each coordinate isopentenyl diphosphate. Cys-97 contacts [4Fe-4S] cluster. Position 125 (His-125) interacts with (2E)-4-hydroxy-3-methylbut-2-enyl diphosphate. His-125 is a binding site for dimethylallyl diphosphate. His-125 is an isopentenyl diphosphate binding site. The active-site Proton donor is the Glu-127. Thr-168 serves as a coordination point for (2E)-4-hydroxy-3-methylbut-2-enyl diphosphate. Cys-225 lines the [4Fe-4S] cluster pocket. Ser-253, Ser-254, Asn-255, and Ser-302 together coordinate (2E)-4-hydroxy-3-methylbut-2-enyl diphosphate. Residues Ser-253, Ser-254, Asn-255, and Ser-302 each coordinate dimethylallyl diphosphate. Ser-253, Ser-254, Asn-255, and Ser-302 together coordinate isopentenyl diphosphate.

Belongs to the IspH family. The cofactor is [4Fe-4S] cluster.

It catalyses the reaction isopentenyl diphosphate + 2 oxidized [2Fe-2S]-[ferredoxin] + H2O = (2E)-4-hydroxy-3-methylbut-2-enyl diphosphate + 2 reduced [2Fe-2S]-[ferredoxin] + 2 H(+). The enzyme catalyses dimethylallyl diphosphate + 2 oxidized [2Fe-2S]-[ferredoxin] + H2O = (2E)-4-hydroxy-3-methylbut-2-enyl diphosphate + 2 reduced [2Fe-2S]-[ferredoxin] + 2 H(+). It functions in the pathway isoprenoid biosynthesis; dimethylallyl diphosphate biosynthesis; dimethylallyl diphosphate from (2E)-4-hydroxy-3-methylbutenyl diphosphate: step 1/1. It participates in isoprenoid biosynthesis; isopentenyl diphosphate biosynthesis via DXP pathway; isopentenyl diphosphate from 1-deoxy-D-xylulose 5-phosphate: step 6/6. In terms of biological role, catalyzes the conversion of 1-hydroxy-2-methyl-2-(E)-butenyl 4-diphosphate (HMBPP) into a mixture of isopentenyl diphosphate (IPP) and dimethylallyl diphosphate (DMAPP). Acts in the terminal step of the DOXP/MEP pathway for isoprenoid precursor biosynthesis. The sequence is that of 4-hydroxy-3-methylbut-2-enyl diphosphate reductase from Chlorobium chlorochromatii (strain CaD3).